Here is a 384-residue protein sequence, read N- to C-terminus: MTEMPKKKFSPRSARGDKPRYGEQKPKLKRSGDKPRFNDDQPQGFKEKSDRFQDKPRPRTNDDKPRRAGDKPSNFKSRFKDKDRDKPRYGDDRPRRSGQKPPFGKTFPAAPPPMDSEQAQEALDLLYGHHAVLAALDGDRQLNRIWITSHLRHDIRYRTKIQTAKANGTVVDEVDNFRLNQITHNANHQGIAAQVAPYHYWELGDLIDKAKSQSTAPVLIIIDSITDPHNLGAIIRTAEAFGAQGMVLPQRRVAGITSTVMKVAAGALEHFPVARVVNLSRALETLKESGFWIYGTVAGKQTALHQADLREPMGLVIGSEGEGLSLLTQKHCDHLITIPLAGKTPSLNASVAAAISLYEIFRQRGFDRPTLSHTASDLREVSED.

The segment at 1–116 is disordered; sequence MTEMPKKKFS…FPAAPPPMDS (116 aa). 2 stretches are compositionally biased toward basic and acidic residues: residues 14 to 70 and 78 to 95; these read ARGD…RAGD and RFKD…DRPR. Positions 318, 338, and 347 each coordinate S-adenosyl-L-methionine.

Belongs to the class IV-like SAM-binding methyltransferase superfamily. RNA methyltransferase TrmH family.

This is an uncharacterized protein from Synechocystis sp. (strain ATCC 27184 / PCC 6803 / Kazusa).